Here is a 158-residue protein sequence, read N- to C-terminus: MNKTPMTTRGAEKLREELNHLKTVARPRVIEAIAEARAHGDLKENAEYQAAREQQGFIEGRIKEIEAKLANAQIIDVTRLNPGGKVVFGATAEIEDLASGEVVTYQIVGEDEAEIKEGRISVTSPIARALIGKQEGDVATVQAPGGTREYEIVSVRYV.

Positions 49-73 form a coiled coil; the sequence is QAAREQQGFIEGRIKEIEAKLANAQ.

This sequence belongs to the GreA/GreB family.

Its function is as follows. Necessary for efficient RNA polymerase transcription elongation past template-encoded arresting sites. The arresting sites in DNA have the property of trapping a certain fraction of elongating RNA polymerases that pass through, resulting in locked ternary complexes. Cleavage of the nascent transcript by cleavage factors such as GreA or GreB allows the resumption of elongation from the new 3'terminus. GreA releases sequences of 2 to 3 nucleotides. The protein is Transcription elongation factor GreA of Methylococcus capsulatus (strain ATCC 33009 / NCIMB 11132 / Bath).